A 473-amino-acid chain; its full sequence is Fumarate hydratase class II (473 aa).

Residues 105–107 (SGT), 130–133 (HPND), 140–142 (SSN), and threonine 188 each bind substrate. Catalysis depends on histidine 189, which acts as the Proton donor/acceptor. Residue serine 319 is part of the active site. Substrate contacts are provided by residues serine 320 and 325–327 (KVN).

It belongs to the class-II fumarase/aspartase family. Fumarase subfamily. As to quaternary structure, homotetramer.

The protein localises to the cytoplasm. It catalyses the reaction (S)-malate = fumarate + H2O. Its pathway is carbohydrate metabolism; tricarboxylic acid cycle; (S)-malate from fumarate: step 1/1. In terms of biological role, involved in the TCA cycle. Catalyzes the stereospecific interconversion of fumarate to L-malate. This chain is Fumarate hydratase class II, found in Xylella fastidiosa (strain Temecula1 / ATCC 700964).